Here is a 449-residue protein sequence, read N- to C-terminus: F-box/LRR-repeat protein At3g60040 (449 aa).

The F-box domain occupies 12 to 64 (RDAISWLPDEVLGKILSLIPTKQAVSTSLLAKKWRTIFRLVDHLELDDSFSLQ). LRR repeat units follow at residues 161 to 188 (LTLG…FIDT), 191 to 215 (FYDI…SVHH), 216 to 237 (HDFI…SVDY), 239 to 263 (CPDD…EYSH), 287 to 312 (ERKV…HLSP), and 340 to 365 (KNKR…IVKD).

The chain is F-box/LRR-repeat protein At3g60040 from Arabidopsis thaliana (Mouse-ear cress).